The following is a 205-amino-acid chain: Small ribosomal subunit protein uS5 (205 aa).

In terms of domain architecture, S5 DRBM spans L49 to V112.

It belongs to the universal ribosomal protein uS5 family. As to quaternary structure, part of the 30S ribosomal subunit. Contacts protein S4.

With S4 and S12 plays an important role in translational accuracy. This Methanoregula boonei (strain DSM 21154 / JCM 14090 / 6A8) protein is Small ribosomal subunit protein uS5.